The sequence spans 329 residues: Beta-ketoacyl-[acyl-carrier-protein] synthase III (329 aa).

Active-site residues include C123 and H256. An ACP-binding region spans residues 257–261 (QANIR). Residue N286 is part of the active site.

It belongs to the thiolase-like superfamily. FabH family. As to quaternary structure, homodimer.

Its subcellular location is the cytoplasm. It catalyses the reaction malonyl-[ACP] + acetyl-CoA + H(+) = 3-oxobutanoyl-[ACP] + CO2 + CoA. The protein operates within lipid metabolism; fatty acid biosynthesis. Catalyzes the condensation reaction of fatty acid synthesis by the addition to an acyl acceptor of two carbons from malonyl-ACP. Catalyzes the first condensation reaction which initiates fatty acid synthesis and may therefore play a role in governing the total rate of fatty acid production. Possesses both acetoacetyl-ACP synthase and acetyl transacylase activities. Its substrate specificity determines the biosynthesis of branched-chain and/or straight-chain of fatty acids. In Burkholderia mallei (strain NCTC 10247), this protein is Beta-ketoacyl-[acyl-carrier-protein] synthase III.